Here is a 500-residue protein sequence, read N- to C-terminus: Glycogen synthase (500 aa).

Lys-15 is a binding site for ADP-alpha-D-glucose.

The protein belongs to the glycosyltransferase 1 family. Bacterial/plant glycogen synthase subfamily.

The enzyme catalyses [(1-&gt;4)-alpha-D-glucosyl](n) + ADP-alpha-D-glucose = [(1-&gt;4)-alpha-D-glucosyl](n+1) + ADP + H(+). It functions in the pathway glycan biosynthesis; glycogen biosynthesis. Functionally, synthesizes alpha-1,4-glucan chains using ADP-glucose. This is Glycogen synthase from Protochlamydia amoebophila (strain UWE25).